The chain runs to 842 residues: Squamosa promoter-binding-like protein 9 (842 aa).

Over residues 1–18 the composition is skewed to gly residues; that stretch reads MDAPGGGGGGGGGGGGVD. 3 disordered regions span residues 1–22, 59–97, and 140–168; these read MDAPGGGGGGGGGGGGVDAGEP, ALLPPAPSPQPAEAEAEAAGPASLPSSMQAEGSKRRVRK, and RKKPKGAGRGSGAAVGGSGGGASRGTPAE. Over residues 69-85 the composition is skewed to low complexity; the sequence is PAEAEAEAAGPASLPSS. Residues 146–162 are compositionally biased toward gly residues; the sequence is AGRGSGAAVGGSGGGAS. An SBP-type; atypical zinc finger spans residues 168–245; sequence EMKCQVPGCE…ERHNKRRRRK (78 aa). Zn(2+) is bound by residues Cys-171, Cys-176, Cys-193, Cys-196, Cys-212, Cys-215, His-219, and Cys-231. Positions 228 to 244 match the Bipartite nuclear localization signal motif; it reads KRSCRRKLERHNKRRRR. Residues 236–246 are compositionally biased toward basic residues; the sequence is ERHNKRRRRKP. The interval 236–256 is disordered; that stretch reads ERHNKRRRRKPDSKGILEKDI.

In terms of tissue distribution, ubiquitous.

The protein localises to the nucleus. Its function is as follows. Trans-acting factor that binds specifically to the consensus nucleotide sequence 5'-TNCGTACAA-3'. This is Squamosa promoter-binding-like protein 9 (SPL9) from Oryza sativa subsp. japonica (Rice).